The sequence spans 266 residues: Glutamate racemase (266 aa).

Residues 10 to 11 (DS) and 42 to 43 (YG) each bind substrate. Cys73 functions as the Proton donor/acceptor in the catalytic mechanism. 74 to 75 (NT) is a substrate binding site. Cys183 acts as the Proton donor/acceptor in catalysis. 184–185 (TH) serves as a coordination point for substrate.

It belongs to the aspartate/glutamate racemases family.

The catalysed reaction is L-glutamate = D-glutamate. It participates in cell wall biogenesis; peptidoglycan biosynthesis. Provides the (R)-glutamate required for cell wall biosynthesis. The chain is Glutamate racemase from Lactobacillus johnsonii (strain CNCM I-12250 / La1 / NCC 533).